The chain runs to 362 residues: Endopolygalacturonase II (362 aa).

The N-terminal stretch at 1 to 21 is a signal peptide; the sequence is MHSFASLLAYGLAASATLASA. A propeptide spanning residues 22 to 27 is cleaved from the precursor; that stretch reads SPIEAR. Cys-30 and Cys-45 form a disulfide bridge. The PbH1 1 repeat unit spans residues 156–186; it reads ADDITLTDITINNADGDTLGGHNTDAFDVGN. Catalysis depends on Asp-201, which acts as the Proton donor. The cysteines at positions 203 and 219 are disulfide-linked. The active site involves His-223. PbH1 repeat units follow at residues 238–259, 267–289, and 301–322; these read VKNVTIEHSTVSNSENAVRIKT, VSEITYSNIVMSGISDYGVVIQQ, and TNGVTITDVKLESVTGTVDSKA. Asn-240 is a glycosylation site (N-linked (GlcNAc...) (high mannose) asparagine). Cystine bridges form between Cys-329-Cys-334 and Cys-353-Cys-362.

It belongs to the glycosyl hydrolase 28 family.

It localises to the secreted. It catalyses the reaction (1,4-alpha-D-galacturonosyl)n+m + H2O = (1,4-alpha-D-galacturonosyl)n + (1,4-alpha-D-galacturonosyl)m.. Involved in maceration and soft-rotting of plant tissue. Hydrolyzes the 1,4-alpha glycosidic bonds of de-esterified pectate in the smooth region of the plant cell wall. In Aspergillus niger, this protein is Endopolygalacturonase II.